The primary structure comprises 418 residues: Tyrosine--tRNA ligase (418 aa).

Residue Tyr34 participates in L-tyrosine binding. Positions 39–48 match the 'HIGH' region motif; sequence PTADSLHLGH. L-tyrosine contacts are provided by Tyr169 and Gln173. Positions 229-233 match the 'KMSKS' region motif; sequence KFGKS. Residue Lys232 participates in ATP binding. The region spanning 352-418 is the S4 RNA-binding domain; it reads LNIVDMLVTA…GKKKYAVLTY (67 aa).

The protein belongs to the class-I aminoacyl-tRNA synthetase family. TyrS type 1 subfamily. As to quaternary structure, homodimer.

Its subcellular location is the cytoplasm. It catalyses the reaction tRNA(Tyr) + L-tyrosine + ATP = L-tyrosyl-tRNA(Tyr) + AMP + diphosphate + H(+). In terms of biological role, catalyzes the attachment of tyrosine to tRNA(Tyr) in a two-step reaction: tyrosine is first activated by ATP to form Tyr-AMP and then transferred to the acceptor end of tRNA(Tyr). The chain is Tyrosine--tRNA ligase from Streptococcus equi subsp. zooepidemicus (strain MGCS10565).